The following is a 384-amino-acid chain: 8-amino-7-oxononanoate synthase (384 aa).

Arg-21 lines the substrate pocket. Pyridoxal 5'-phosphate is bound at residue 108–109; that stretch reads GF. Position 133 (His-133) interacts with substrate. Residues Ser-179, His-207, and Thr-233 each coordinate pyridoxal 5'-phosphate. Residue Lys-236 is modified to N6-(pyridoxal phosphate)lysine. Thr-352 is a substrate binding site.

This sequence belongs to the class-II pyridoxal-phosphate-dependent aminotransferase family. BioF subfamily. Homodimer. The cofactor is pyridoxal 5'-phosphate.

The catalysed reaction is 6-carboxyhexanoyl-[ACP] + L-alanine + H(+) = (8S)-8-amino-7-oxononanoate + holo-[ACP] + CO2. The protein operates within cofactor biosynthesis; biotin biosynthesis. Its function is as follows. Catalyzes the decarboxylative condensation of pimeloyl-[acyl-carrier protein] and L-alanine to produce 8-amino-7-oxononanoate (AON), [acyl-carrier protein], and carbon dioxide. In Shigella sonnei (strain Ss046), this protein is 8-amino-7-oxononanoate synthase.